Here is a 573-residue protein sequence, read N- to C-terminus: MNQTRVFLIFAWLMVAALLWMEWGKDKAPANAPTPIASQAVPAARDPDAAAPAANVPSAQAIPQAGSPAAVPATSTTTATPATTGAAPAITLTSDVLRLKLDGRSVLDAELLQFPQTKDGTEPVKLLTEDAAHPYNATSGWASERSPVPGVGGFRAEQPGTTFELAKGQNTLVVPFVWNGPNGVSIRRIFTLQRGSYAISIKDEVINKSDAAWNGYVFRKLSRVPTILSRGMTNPDSFSFNGATWYSPQEGYERRAFKDYMDDGGLNRQITGGWVALLQHHFFTAWIPQKDQASLYVLAQDGPRDVAELRGPAFTVAPGQSASTEARLWVGPKLVSLLAKEDVKGLDRVVDYSRFSIMAIIGQGLFWVLSHLHSFLHNWGWAIIGLVVLLRLALYPLSAAQYKSGAKMRRFQPRLAQLKERYGDDRQKYQQATMELFKKEKINPMGGCLPLLIQMPIFFALYWVLVESVELRQAPWLGWIQDLTARDPYFILPVLNIAIMWATQKLTPTPGMDPMQAKMMQFMPLVFGVMMAFMPAGLVLYWVVNGGLGLLIQWWMIRQHGEKPSKIIQANAK.

Residues 6–26 (VFLIFAWLMVAALLWMEWGKD) traverse the membrane as a helical segment. Positions 63–82 (PQAGSPAAVPATSTTTATPA) are disordered. 5 consecutive transmembrane segments (helical) span residues 355–375 (FSIM…LHSF), 379–399 (WGWA…PLSA), 446–466 (GGCL…WVLV), 488–508 (PYFI…KLTP), and 524–544 (PLVF…YWVV).

This sequence belongs to the OXA1/ALB3/YidC family. Type 1 subfamily. In terms of assembly, interacts with the Sec translocase complex via SecD. Specifically interacts with transmembrane segments of nascent integral membrane proteins during membrane integration.

It localises to the cell inner membrane. Functionally, required for the insertion and/or proper folding and/or complex formation of integral membrane proteins into the membrane. Involved in integration of membrane proteins that insert both dependently and independently of the Sec translocase complex, as well as at least some lipoproteins. Aids folding of multispanning membrane proteins. The sequence is that of Membrane protein insertase YidC from Xanthomonas campestris pv. campestris (strain 8004).